A 137-amino-acid polypeptide reads, in one-letter code: UBAP1-MVB12-associated (UMA)-domain containing protein 1 (137 aa).

The tract at residues 1 to 72 (MFHFFRKPPE…VSDPEMENKA (72 aa)) is disordered. A compositionally biased stretch (basic and acidic residues) spans 32-44 (DEQRMTARGKTSD). The span at 50–63 (PLETNKENSSSVTV) shows a compositional bias: polar residues. In terms of domain architecture, UMA spans 86–134 (LSDVPFTLAPHVLAVQGTITDLPDHLLSYDGSENLSRFWYDFTLENSVL).

The sequence is that of UBAP1-MVB12-associated (UMA)-domain containing protein 1 from Homo sapiens (Human).